Reading from the N-terminus, the 167-residue chain is Ubiquitin-fold modifier-conjugating enzyme 1 (167 aa).

Residue C116 is the Glycyl thioester intermediate of the active site. K122 is covalently cross-linked (Glycyl lysine isopeptide (Lys-Gly) (interchain with G-Cter in UFM1)).

Belongs to the ubiquitin-conjugating enzyme family. UFC1 subfamily. In terms of assembly, interacts with UBA5 (via C-terminus). Interacts with UFL1. Interacts with UFM1. Interacts with KIRREL3. In terms of processing, ufmylated at Lys-122. Deufmylated by UFSP1.

Functionally, E2-like enzyme which specifically catalyzes the second step in ufmylation. Accepts the ubiquitin-like modifier UFM1 from the E1 enzyme UBA5 and forms an intermediate with UFM1 via a thioester linkage. Ufmylation is involved in various processes, such as ribosome recycling, response to DNA damage, interferon response or reticulophagy (also called ER-phagy). In Rattus norvegicus (Rat), this protein is Ubiquitin-fold modifier-conjugating enzyme 1.